The chain runs to 345 residues: DNA-directed RNA polymerase subunit alpha (345 aa).

An alpha N-terminal domain (alpha-NTD) region spans residues 1 to 234 (MRKNEMSTSK…DLLTTFLYVR (234 aa)). Residues 266 to 345 (LEERVLENRF…DKKIVLNRRK (80 aa)) form an alpha C-terminal domain (alpha-CTD) region.

The protein belongs to the RNA polymerase alpha chain family. As to quaternary structure, in plastids the minimal PEP RNA polymerase catalytic core is composed of four subunits: alpha, beta, beta', and beta''. When a (nuclear-encoded) sigma factor is associated with the core the holoenzyme is formed, which can initiate transcription.

Its subcellular location is the plastid. It is found in the chloroplast. The enzyme catalyses RNA(n) + a ribonucleoside 5'-triphosphate = RNA(n+1) + diphosphate. DNA-dependent RNA polymerase catalyzes the transcription of DNA into RNA using the four ribonucleoside triphosphates as substrates. In Adiantum capillus-veneris (Maidenhair fern), this protein is DNA-directed RNA polymerase subunit alpha.